The following is a 374-amino-acid chain: Phosphatidylglycerol--prolipoprotein diacylglyceryl transferase (374 aa).

The next 4 membrane-spanning stretches (helical) occupy residues 33–53 (ICFITGFILGYFIIVPIIALF), 155–175 (LCWFIVFGTLIGARLGAVFFY), 195–215 (LASHGGALGVMLALFFYTSYI), and 222–242 (LSFLRVLDFVAIPSALTAVFI). Residue arginine 243 coordinates a 1,2-diacyl-sn-glycero-3-phospho-(1'-sn-glycerol). 3 helical membrane passes run 279-299 (PVQLYEAFAYLMTFFLLFTLW), 306-326 (LAAGTYAGFLFIFNFSSRFLL), and 341-361 (ILQMGQLLSIPFILFGICLVW).

It belongs to the Lgt family.

The protein resides in the cell inner membrane. It carries out the reaction L-cysteinyl-[prolipoprotein] + a 1,2-diacyl-sn-glycero-3-phospho-(1'-sn-glycerol) = an S-1,2-diacyl-sn-glyceryl-L-cysteinyl-[prolipoprotein] + sn-glycerol 1-phosphate + H(+). Its pathway is protein modification; lipoprotein biosynthesis (diacylglyceryl transfer). Its function is as follows. Catalyzes the transfer of the diacylglyceryl group from phosphatidylglycerol to the sulfhydryl group of the N-terminal cysteine of a prolipoprotein, the first step in the formation of mature lipoproteins. The chain is Phosphatidylglycerol--prolipoprotein diacylglyceryl transferase from Protochlamydia amoebophila (strain UWE25).